The sequence spans 732 residues: Translation initiation factor IF-2 (732 aa).

The segment at 40–147 (PEVVEKLDHT…QQEQPMKKEK (108 aa)) is disordered. Residues 42–67 (VVEKLDHTYNKKNERPQASAPKEKQK) are compositionally biased toward basic and acidic residues. The segment covering 90 to 103 (KVPKKKSANKKKEG) has biased composition (basic residues). Basic and acidic residues predominate over residues 104-117 (KKHDLQLQQQEKKI). Positions 118–129 (FHQQKKKIKGKA) are enriched in basic residues. Positions 233-402 (ERPPVVTIMG…LLVSEMEELK (170 aa)) constitute a tr-type G domain. A G1 region spans residues 242-249 (GHVDHGKT). 242–249 (GHVDHGKT) provides a ligand contact to GTP. Residues 267-271 (GITQH) form a G2 region. The tract at residues 288–291 (DTPG) is G3. GTP-binding positions include 288–292 (DTPGH) and 342–345 (NKMD). Positions 342-345 (NKMD) are G4. A G5 region spans residues 378 to 380 (SAK).

Belongs to the TRAFAC class translation factor GTPase superfamily. Classic translation factor GTPase family. IF-2 subfamily.

The protein resides in the cytoplasm. Functionally, one of the essential components for the initiation of protein synthesis. Protects formylmethionyl-tRNA from spontaneous hydrolysis and promotes its binding to the 30S ribosomal subunits. Also involved in the hydrolysis of GTP during the formation of the 70S ribosomal complex. The polypeptide is Translation initiation factor IF-2 (Geobacillus sp. (strain WCH70)).